The following is a 785-amino-acid chain: E3 UFM1-protein ligase 1 homolog (785 aa).

The tract at residues 404 to 482 (NASFQDQDDD…AGGGGGNKKT (79 aa)) is disordered.

It belongs to the UFL1 family.

In terms of biological role, E3 UFM1-protein ligase that mediates ufmylation of target proteins. This chain is E3 UFM1-protein ligase 1 homolog, found in Drosophila persimilis (Fruit fly).